Here is a 173-residue protein sequence, read N- to C-terminus: Translation initiation factor IF-3 (173 aa).

It belongs to the IF-3 family. In terms of assembly, monomer.

It is found in the cytoplasm. Functionally, IF-3 binds to the 30S ribosomal subunit and shifts the equilibrium between 70S ribosomes and their 50S and 30S subunits in favor of the free subunits, thus enhancing the availability of 30S subunits on which protein synthesis initiation begins. The sequence is that of Translation initiation factor IF-3 from Methylorubrum extorquens (strain CM4 / NCIMB 13688) (Methylobacterium extorquens).